Here is a 234-residue protein sequence, read N- to C-terminus: MHADPGIEVSLAKGFFITFEGGEGTGKSTQMRLLAEALSARGYRVLTTREPGGSVGAEAVRHVLLSGAAESFGVRMEAILFAAARSDHVEEVIRPALEQGTIVLCDRFMDSSRVYQGVTGNLEPAFVETLERVAVNGVIPDCTIIFDLPASVGLERARRRAANDSPDRFEKEQLETHEKRREAFLDIAAADPERCRVVDANRPPTAIAAEVLSLVEALLPLEGKPQPSNAEATS.

21-28 (GGEGTGKS) serves as a coordination point for ATP.

The protein belongs to the thymidylate kinase family.

The enzyme catalyses dTMP + ATP = dTDP + ADP. Functionally, phosphorylation of dTMP to form dTDP in both de novo and salvage pathways of dTTP synthesis. This Rhizobium meliloti (strain 1021) (Ensifer meliloti) protein is Thymidylate kinase.